A 516-amino-acid polypeptide reads, in one-letter code: Gamma-aminobutyrate transaminase 1, mitochondrial (516 aa).

The N-terminal 47 residues, 1-47, are a transit peptide targeting the mitochondrion; sequence MVIARGLLRSNASSSSSQAINLLKYVTSTGSLQGHTQNLCDASTRHF. Residues 45–60 are compositionally biased toward polar residues; it reads RHFSSVPSPQSNSTEE. The interval 45 to 64 is disordered; that stretch reads RHFSSVPSPQSNSTEENGFK. Pyridoxal 5'-phosphate is bound at residue 171 to 172; that stretch reads GS. Tyr204 serves as a coordination point for substrate. Asp311 provides a ligand contact to pyridoxal 5'-phosphate. Residue Lys340 coordinates substrate. An N6-(pyridoxal phosphate)lysine modification is found at Lys340.

This sequence belongs to the class-III pyridoxal-phosphate-dependent aminotransferase family.

It localises to the mitochondrion. It carries out the reaction 4-aminobutanoate + pyruvate = succinate semialdehyde + L-alanine. The enzyme catalyses 4-aminobutanoate + glyoxylate = succinate semialdehyde + glycine. In terms of biological role, transaminase that degrades gamma-amino butyric acid (GABA) and uses pyruvate as amino-group acceptor, but not 2-oxoglutarate. In Oryza sativa subsp. indica (Rice), this protein is Gamma-aminobutyrate transaminase 1, mitochondrial.